A 250-amino-acid polypeptide reads, in one-letter code: Cobalt transport protein CbiM (250 aa).

A signal peptide spans 1 to 25 (MKQNIKLGVIAALMLIVLTPVTSNA). Transmembrane regions (helical) follow at residues 33–53 (LPVK…LVGL), 68–88 (VLLA…IPSV), 100–120 (LGAI…VLIF), 132–152 (TLGA…FLIF), 163–183 (AMPV…VTSI), and 205–225 (GIFF…TVIV).

This sequence belongs to the CbiM family. As to quaternary structure, forms an energy-coupling factor (ECF) transporter complex composed of an ATP-binding protein (A component, CbiO), a transmembrane protein (T component, CbiQ) and 2 possible substrate-capture proteins (S components, CbiM and CbiN) of unknown stoichimetry.

It is found in the cell membrane. The protein operates within cofactor biosynthesis; adenosylcobalamin biosynthesis. Part of the energy-coupling factor (ECF) transporter complex CbiMNOQ involved in cobalt import. This Clostridioides difficile (strain R20291) (Peptoclostridium difficile) protein is Cobalt transport protein CbiM.